The primary structure comprises 199 residues: MTKVLVLYYSAYGHIEAMANAVAEGAREAGATVDVKRVPELVPDDVAKASHYKLDQAAPIAKIEELANYDAIIVGTGTRFGRMASQMANFLDQAGGLWARGALNGKVGGAFTSTATQHGGQETTLFTIITNLLHFGMTIVGLNYGFAGQMKLDEVTGGSPYGATTITGGDGSRLPSENELAGARYQGRVIAETAKKLHG.

The Flavodoxin-like domain occupies 4–190 (VLVLYYSAYG…AGARYQGRVI (187 aa)). Residues 10 to 15 (SAYGHI) and 78 to 80 (TRF) contribute to the FMN site. Position 12 (Tyr-12) interacts with NAD(+). Trp-98 serves as a coordination point for substrate. Residues 113–119 (STATQHG) and His-134 contribute to the FMN site.

It belongs to the WrbA family. FMN is required as a cofactor.

The enzyme catalyses a quinone + NADH + H(+) = a quinol + NAD(+). It carries out the reaction a quinone + NADPH + H(+) = a quinol + NADP(+). The chain is NAD(P)H dehydrogenase (quinone) from Bradyrhizobium sp. (strain BTAi1 / ATCC BAA-1182).